A 57-amino-acid polypeptide reads, in one-letter code: Protein YnaL (57 aa).

Positions 7 to 57 (LQIPVPEPIPGDPVPVPDPIPRPQPMPDPPPDEEPIKLSHRERRSARIRAC) are disordered. Over residues 11-35 (VPEPIPGDPVPVPDPIPRPQPMPDP) the composition is skewed to pro residues. Residues 46–57 (HRERRSARIRAC) are compositionally biased toward basic residues.

This chain is Protein YnaL, found in Escherichia coli (strain K12).